Reading from the N-terminus, the 436-residue chain is 3-ketoacyl-CoA thiolase (436 aa).

The active-site Acyl-thioester intermediate is Cys99. Catalysis depends on proton acceptor residues His392 and Cys422.

This sequence belongs to the thiolase-like superfamily. Thiolase family. As to quaternary structure, heterotetramer of two alpha chains (FadJ) and two beta chains (FadI).

Its subcellular location is the cytoplasm. The catalysed reaction is an acyl-CoA + acetyl-CoA = a 3-oxoacyl-CoA + CoA. Its pathway is lipid metabolism; fatty acid beta-oxidation. Functionally, catalyzes the final step of fatty acid oxidation in which acetyl-CoA is released and the CoA ester of a fatty acid two carbons shorter is formed. This Photorhabdus laumondii subsp. laumondii (strain DSM 15139 / CIP 105565 / TT01) (Photorhabdus luminescens subsp. laumondii) protein is 3-ketoacyl-CoA thiolase.